The sequence spans 441 residues: ACT domain-containing protein ACR8 (441 aa).

4 consecutive ACT domains span residues 34–110, 115–196, 248–324, and 326–405; these read IVKV…NIEV, ALEL…SAAK, VVNV…ALEG, and RLEL…TMYH.

Expressed in roots, leaves, flowers and siliques.

Its function is as follows. May bind amino acids. This Arabidopsis thaliana (Mouse-ear cress) protein is ACT domain-containing protein ACR8.